Reading from the N-terminus, the 708-residue chain is G-box-binding factor (708 aa).

2 disordered regions span residues 1 to 29 (MLSTHHHQGNSSSSSSSSSPSQTIGGSDL) and 123 to 339 (QQAQ…QTIP). 3 stretches are compositionally biased toward low complexity: residues 11 to 21 (SSSSSSSSSPS), 123 to 219 (QQAQ…QHHQ), and 227 to 316 (SQPQ…SPST). The span at 324 to 333 (ETSNSEKKDS) shows a compositional bias: basic and acidic residues. Repeat copies occupy residues 339 to 368 (PKCTRCNEAASWKHDKRRWWCKECKKAFTP) and 481 to 510 (PPCPLCRGISSWKHDKKRYFCKECKKPFTP). The tract at residues 511–604 (VGAGLSPSSS…PTYSPNPSLP (94 aa)) is disordered. The segment covering 516–590 (SPSSSPSSPK…SSISQSPLQL (75 aa)) has biased composition (low complexity). Positions 591–600 (NYQTPTYSPN) are enriched in polar residues.

It localises to the nucleus. In terms of biological role, cAMP-responsive transcriptional activator regulating late gene expression. Essential component of the developmental switch between early and late development. Binds to a number of CA/GT-rich gene regulatory elements. This is G-box-binding factor (gbfA) from Dictyostelium discoideum (Social amoeba).